The chain runs to 229 residues: Ribosome maturation factor RimM (229 aa).

The region spanning 148-229 is the PRC barrel domain; the sequence is ADEFYWVDLI…RVVVDWEADY (82 aa).

Belongs to the RimM family. Binds ribosomal protein uS19.

Its subcellular location is the cytoplasm. In terms of biological role, an accessory protein needed during the final step in the assembly of 30S ribosomal subunit, possibly for assembly of the head region. Essential for efficient processing of 16S rRNA. May be needed both before and after RbfA during the maturation of 16S rRNA. It has affinity for free ribosomal 30S subunits but not for 70S ribosomes. This chain is Ribosome maturation factor RimM, found in Burkholderia pseudomallei (strain 1710b).